Reading from the N-terminus, the 498-residue chain is NAC domain-containing protein 75 (498 aa).

One can recognise an NAC domain in the interval 48-215 (LPAGVKFDPT…ELVVSKIFYQ (168 aa)). The DNA-binding element occupies 166–221 (KGCKKILVLYTNFGKNRKPEKTNWVMHQYHLGTHEEEKEGELVVSKIFYQTQPRQC). 4 disordered regions span residues 225-278 (SSTS…PNRS), 338-374 (VMAE…QRHH), 423-443 (QQQL…GGRS), and 457-498 (STTH…DHHG). Residues 233 to 248 (IGGGGGEASSGGGGGE) show a composition bias toward gly residues. A compositionally biased stretch (low complexity) spans 256 to 266 (GTTSGGSCSSS). A compositionally biased stretch (basic residues) spans 356–374 (HMAHDHHHHHHQQQQQRHH). The segment covering 466–475 (GSSSMGNQQE) has biased composition (polar residues).

As to expression, expressed in the vascular cylinder of roots. Expressed in the differentiation zone of the root stele.

Its subcellular location is the nucleus. Its function is as follows. Transcription activator involved in xylem formation. Promotes the expression of the secondary wall-associated transcription factor MYB46. Functions upstream of NAC030/VND7, a master switch of xylem vessel differentiation. Acts as a upstream regulator of NAC101/VND6 and LBD30/ASL19. In Arabidopsis thaliana (Mouse-ear cress), this protein is NAC domain-containing protein 75.